The following is an 808-amino-acid chain: Glycerol-3-phosphate acyltransferase (808 aa).

The short motif at histidine 306 to aspartate 311 is the HXXXXD motif element.

Belongs to the GPAT/DAPAT family.

It is found in the cell inner membrane. The catalysed reaction is sn-glycerol 3-phosphate + an acyl-CoA = a 1-acyl-sn-glycero-3-phosphate + CoA. It functions in the pathway phospholipid metabolism; CDP-diacylglycerol biosynthesis; CDP-diacylglycerol from sn-glycerol 3-phosphate: step 1/3. The sequence is that of Glycerol-3-phosphate acyltransferase from Vibrio parahaemolyticus serotype O3:K6 (strain RIMD 2210633).